The chain runs to 324 residues: tRNA pseudouridine synthase B (324 aa).

Asp-49 functions as the Nucleophile in the catalytic mechanism. A disordered region spans residues 87–107; sequence RSTDDLEGQPTKTSDKRPSRE.

The protein belongs to the pseudouridine synthase TruB family. Type 1 subfamily.

The catalysed reaction is uridine(55) in tRNA = pseudouridine(55) in tRNA. In terms of biological role, responsible for synthesis of pseudouridine from uracil-55 in the psi GC loop of transfer RNAs. This chain is tRNA pseudouridine synthase B, found in Brucella melitensis biotype 1 (strain ATCC 23456 / CCUG 17765 / NCTC 10094 / 16M).